A 255-amino-acid polypeptide reads, in one-letter code: Post-GPI attachment to proteins factor 2 (255 aa).

5 helical membrane-spanning segments follow: residues 23–43, 111–131, 143–163, 185–205, and 209–229; these read LALV…IWSL, LGIL…CLSF, NAFV…YLLN, LFLV…RHNS, and AGVY…NMGF.

This sequence belongs to the PGAP2 family.

The protein localises to the golgi apparatus membrane. The protein resides in the endoplasmic reticulum membrane. In terms of biological role, involved in the lipid remodeling steps of GPI-anchor maturation. Required for stable expression of GPI-anchored proteins at the cell surface. The protein is Post-GPI attachment to proteins factor 2 of Drosophila melanogaster (Fruit fly).